A 646-amino-acid polypeptide reads, in one-letter code: Rho guanine nucleotide exchange factor 7 (646 aa).

Positions 6 to 65 (NSQLVVRAKFNFQQTNEDELSFSKGDVIHVTRVEEGGWWEGTHNGRTGWFPSNYVREIKP) constitute an SH3 domain. Residues serine 7, serine 71, and serine 79 each carry the phosphoserine modification. Residues 93–273 (YYNVVLQNIL…KNLSAQCQEV (181 aa)) form the DH domain. Positions 295–400 (DIKTLGSVTY…WVEHLQRQTK (106 aa)) constitute a PH domain. A Phosphoserine modification is found at serine 340. Disordered stretches follow at residues 402 to 464 (TSVS…GPLE) and 500 to 520 (KTMKKLLPKRKPERKPSDEEF). Positions 415–428 (PSHTLPSHPLTPSS) are enriched in polar residues. A compositionally biased stretch (basic residues) spans 500 to 512 (KTMKKLLPKRKPE). Serine 516 and serine 560 each carry phosphoserine.

In terms of assembly, interacts with SCRIB; interaction is direct and may play a role in regulation of apoptosis. Interacts with PAK kinases through the SH3 domain. Interacts with GIT1 and probably TGFB1I1. Interacts with ITCH and PARVB. Interacts with FRMPD4 (via N-terminus). Interacts with CaMK1. Interacts with PTK2/FAK1 and RAC1. Interacts with BIN2. Interacts with YWHAZ. Interacts (via PH domain) with NOX1 (via FAD-binding FR-type domain). Post-translationally, phosphorylated on Ser-516 by CaMK1; enhancement of GEF activity and downstream activation of RAC1. Phosphorylated by PTK2/FAK1; this promotes interaction with RAC1.

It localises to the cell junction. It is found in the focal adhesion. The protein localises to the cell projection. The protein resides in the ruffle. Its subcellular location is the cytoplasm. It localises to the cell cortex. It is found in the lamellipodium. Functionally, acts as a RAC1 guanine nucleotide exchange factor (GEF) and can induce membrane ruffling. Functions in cell migration, attachment and cell spreading. Promotes targeting of RAC1 to focal adhesions. May function as a positive regulator of apoptosis. Downstream of NMDA receptors and CaMKK-CaMK1 signaling cascade, promotes the formation of spines and synapses in hippocampal neurons. In Rattus norvegicus (Rat), this protein is Rho guanine nucleotide exchange factor 7 (Arhgef7).